Consider the following 126-residue polypeptide: MAFDKDAFLTALDSMTVLELNDLVEAIEEKFGVSAAAMAAPAAGGAAGGGAAAAEEKTEFNVVLADAGANKVAVIKAVREITGLGLKEAKDLVDGAPKNVKEGIAKADAEAAVKKLVEAGAKAELK.

It belongs to the bacterial ribosomal protein bL12 family. In terms of assembly, homodimer. Part of the ribosomal stalk of the 50S ribosomal subunit. Forms a multimeric L10(L12)X complex, where L10 forms an elongated spine to which 2 to 4 L12 dimers bind in a sequential fashion. Binds GTP-bound translation factors.

In terms of biological role, forms part of the ribosomal stalk which helps the ribosome interact with GTP-bound translation factors. Is thus essential for accurate translation. The protein is Large ribosomal subunit protein bL12 of Acidovorax sp. (strain JS42).